We begin with the raw amino-acid sequence, 343 residues long: UDP-3-O-acylglucosamine N-acyltransferase (343 aa).

His245 (proton acceptor) is an active-site residue.

Belongs to the transferase hexapeptide repeat family. LpxD subfamily. In terms of assembly, homotrimer.

The catalysed reaction is a UDP-3-O-[(3R)-3-hydroxyacyl]-alpha-D-glucosamine + a (3R)-hydroxyacyl-[ACP] = a UDP-2-N,3-O-bis[(3R)-3-hydroxyacyl]-alpha-D-glucosamine + holo-[ACP] + H(+). The protein operates within bacterial outer membrane biogenesis; LPS lipid A biosynthesis. Its function is as follows. Catalyzes the N-acylation of UDP-3-O-acylglucosamine using 3-hydroxyacyl-ACP as the acyl donor. Is involved in the biosynthesis of lipid A, a phosphorylated glycolipid that anchors the lipopolysaccharide to the outer membrane of the cell. The chain is UDP-3-O-acylglucosamine N-acyltransferase from Phenylobacterium zucineum (strain HLK1).